An 89-amino-acid chain; its full sequence is Small ribosomal subunit protein uS15 (89 aa).

It belongs to the universal ribosomal protein uS15 family. As to quaternary structure, part of the 30S ribosomal subunit. Forms a bridge to the 50S subunit in the 70S ribosome, contacting the 23S rRNA.

Functionally, one of the primary rRNA binding proteins, it binds directly to 16S rRNA where it helps nucleate assembly of the platform of the 30S subunit by binding and bridging several RNA helices of the 16S rRNA. Its function is as follows. Forms an intersubunit bridge (bridge B4) with the 23S rRNA of the 50S subunit in the ribosome. The protein is Small ribosomal subunit protein uS15 of Roseiflexus sp. (strain RS-1).